Reading from the N-terminus, the 230-residue chain is Probable septum site-determining protein MinC (230 aa).

It belongs to the MinC family. Interacts with MinD and FtsZ.

Cell division inhibitor that blocks the formation of polar Z ring septums. Rapidly oscillates between the poles of the cell to destabilize FtsZ filaments that have formed before they mature into polar Z rings. Prevents FtsZ polymerization. This chain is Probable septum site-determining protein MinC, found in Erwinia tasmaniensis (strain DSM 17950 / CFBP 7177 / CIP 109463 / NCPPB 4357 / Et1/99).